Reading from the N-terminus, the 1090-residue chain is Exoglucanase B (1090 aa).

The signal sequence occupies residues 1–33 (MSSTTRRRSAWVAAATVGVSSFLAVAGITPAIA). Residues 34–53 (AAGAGQPATVTVPAASPVRA) constitute a propeptide that is removed on maturation. The tract at residues 54–699 (AVDGEYAQRF…RLFDDGTTTP (646 aa)) is catalytic. The Nucleophile role is filled by D513. 3 Fibronectin type-III domains span residues 706-791 (VPTG…TKAT), 797-887 (APSV…TKSD), and 897-984 (VPAG…TKTP). The region spanning 983-1090 (TPQTGGSCSV…SFTLNGASCT (108 aa)) is the CBM2 domain. C990 and C1089 are disulfide-bonded. Positions 1069 to 1090 (NGSHTGQNPNPASFTLNGASCT) are disordered. Residues 1070–1090 (GSHTGQNPNPASFTLNGASCT) are compositionally biased toward polar residues.

Belongs to the glycosyl hydrolase 48 (cellulase L) family.

The catalysed reaction is Hydrolysis of (1-&gt;4)-beta-D-glucosidic linkages in cellulose and cellotetraose, releasing cellobiose from the non-reducing ends of the chains.. Its function is as follows. Hydrolyzes cellohexaose to a mixture of cellotetraose, cellotriose and cellobiose, with only a trace of glucose. It hydrolyzed cellopentaose to cellotriose and cellobiose, and cellotetraose to cellobiose, but it did not hydrolyze cellotriose. Also has weak endoglucanase activity. Hydrolyzes glucosidic bonds with inversion of anomeric configuration. The polypeptide is Exoglucanase B (cbhB) (Cellulomonas fimi (strain ATCC 484 / DSM 20113 / JCM 1341 / CCUG 24087 / LMG 16345 / NBRC 15513 / NCIMB 8980 / NCTC 7547 / NRS-133)).